A 461-amino-acid polypeptide reads, in one-letter code: Fumarate hydratase class II (461 aa).

Substrate-binding positions include 97–99 (SGT), 127–130 (HPND), 137–139 (SSN), and Thr-185. The active-site Proton donor/acceptor is His-186. Ser-316 is a catalytic residue. Substrate contacts are provided by residues Ser-317 and 322-324 (KVN).

Belongs to the class-II fumarase/aspartase family. Fumarase subfamily. In terms of assembly, homotetramer.

It is found in the cytoplasm. The enzyme catalyses (S)-malate = fumarate + H2O. It participates in carbohydrate metabolism; tricarboxylic acid cycle; (S)-malate from fumarate: step 1/1. In terms of biological role, involved in the TCA cycle. Catalyzes the stereospecific interconversion of fumarate to L-malate. In Staphylococcus aureus (strain Mu50 / ATCC 700699), this protein is Fumarate hydratase class II.